Here is a 138-residue protein sequence, read N- to C-terminus: High mobility group B protein 4 (138 aa).

Disordered regions lie at residues 1–41 (MKGG…PPSA) and 105–138 (LKLA…EDDD). Over residues 18-29 (KTRGRKAGKKTK) the composition is skewed to basic residues. Positions 35–104 (PKRPPSAFFV…EYIKNVQQYN (70 aa)) form a DNA-binding region, HMG box. 2 positions are modified to phosphoserine: serine 123 and serine 130. Positions 126–138 (DEAVSEEEAEDDD) are enriched in acidic residues.

Belongs to the HMGB family. In terms of tissue distribution, mostly expressed roots and flowers, and, to a lower extent, in stems and leaves.

It localises to the nucleus. The protein resides in the cytoplasm. Its subcellular location is the cytosol. Binds preferentially double-stranded DNA. The polypeptide is High mobility group B protein 4 (HMGB4) (Arabidopsis thaliana (Mouse-ear cress)).